A 364-amino-acid polypeptide reads, in one-letter code: Putative serine/threonine-protein phosphatase C06A1.3 (364 aa).

Residues 1 to 24 are disordered; that stretch reads MSTDGNNNKKGSKEGPKSSEISKF. Residues 11–24 show a composition bias toward basic and acidic residues; that stretch reads GSKEGPKSSEISKF. Mn(2+) is bound by residues Asp93, His95, Asp121, and Asn153. The active-site Proton donor is His154. Residues His202 and His277 each contribute to the Mn(2+) site.

The protein belongs to the PPP phosphatase family. PP-1 subfamily. The cofactor is Mn(2+).

It carries out the reaction O-phospho-L-seryl-[protein] + H2O = L-seryl-[protein] + phosphate. It catalyses the reaction O-phospho-L-threonyl-[protein] + H2O = L-threonyl-[protein] + phosphate. This chain is Putative serine/threonine-protein phosphatase C06A1.3, found in Caenorhabditis elegans.